Reading from the N-terminus, the 382-residue chain is Phenylalanine dehydrogenase (382 aa).

An NAD(+)-binding site is contributed by Arg-54. Lys-78 is a binding site for L-phenylalanine. Lys-90 functions as the Proton donor/acceptor in the catalytic mechanism. NAD(+) is bound by residues Asp-125, Ser-156, Thr-160, 190–196, 213–214, 253–254, and 274–276; these read GLGKVGY, DI, AF, and SAN. Asn-276 is a binding site for L-phenylalanine.

The protein belongs to the Glu/Leu/Phe/Val dehydrogenases family.

It catalyses the reaction L-phenylalanine + NAD(+) + H2O = 3-phenylpyruvate + NH4(+) + NADH + H(+). Its activity is regulated as follows. Activity is not affected by the metal chelating agent EDTA. Addition of 1 mM Mg(2+) results in 15% increase in activity, while the enzyme is strongly inhibited by 1 mM Fe(3+), Fe(2+), Cu(2+), Zn(2+) and Ag(+). In terms of biological role, catalyzes the reversible NAD(+)-dependent oxidative deamination of L-phenylalanine to phenylpyruvate. Can also catalyze the oxidative deamination of several other amino acids, with much lower efficiency. Shows activity towards various bulky aromatic alpha-keto acids/esters and (S)-amine alcohols. Can catalyze the amination of 3-(2-chlorophenyl)-2-oxopropionic acid (CPOA) to produce 2-chloro-L-phenylalanine (2-Cl-Phe), a chemical compound used in the pharmaceutical and biotechnology industries. Shows a preference for amination over deamination. The protein is Phenylalanine dehydrogenase of Bacillus thermotolerans (Quasibacillus thermotolerans).